The sequence spans 473 residues: Cysteine--tRNA ligase (473 aa).

Residue Cys27 coordinates Zn(2+). The 'HIGH' region motif lies at 29-39 (ITPYDHVHVGH). Zn(2+) is bound by residues Cys213, His238, and Glu242. The 'KMSKS' region signature appears at 271–275 (KMSKS). ATP is bound at residue Lys274.

The protein belongs to the class-I aminoacyl-tRNA synthetase family. Zn(2+) serves as cofactor.

The protein localises to the cytoplasm. The catalysed reaction is tRNA(Cys) + L-cysteine + ATP = L-cysteinyl-tRNA(Cys) + AMP + diphosphate. In Pyrobaculum calidifontis (strain DSM 21063 / JCM 11548 / VA1), this protein is Cysteine--tRNA ligase.